A 99-amino-acid polypeptide reads, in one-letter code: Cytochrome c-555 (99 aa).

Residues cysteine 23, cysteine 26, histidine 27, and methionine 73 each contribute to the heme c site.

Binds 1 heme c group covalently per subunit.

This is Cytochrome c-555 from Prosthecochloris aestuarii.